Consider the following 438-residue polypeptide: Glycerophosphocholine cholinephosphodiesterase ENPP6 (438 aa).

Positions 1 to 22 (MTRTLLKIYTLFILLLCRQRDA) are cleaved as a signal peptide. The substrate site is built by Asp-32, Ser-69, and Asn-90. Zn(2+) contacts are provided by Asp-32 and Ser-69. The Nucleophile role is filled by Ser-69. Phosphoserine is present on Ser-69. Cys-140 and Cys-152 form a disulfide bridge. A coiled-coil region spans residues 162–226 (KNLTDSMENA…ILNQKIREKN (65 aa)). Asn-163 is a glycosylation site (N-linked (GlcNAc...) asparagine). Asp-191 lines the substrate pocket. Zn(2+) contacts are provided by Asp-191, His-195, Asp-238, and His-239. His-239 lines the substrate pocket. 3 N-linked (GlcNAc...) asparagine glycosylation sites follow: Asn-258, Asn-287, and Asn-339. His-352 is a substrate binding site. Residue His-352 participates in Zn(2+) binding. N-linked (GlcNAc...) asparagine glycosylation is present at Asn-402. Ser-415 carries the GPI-anchor amidated serine lipid modification. A propeptide spans 416-438 (AATAGASLISCCFLLLLTLTGVC) (removed in mature form).

Belongs to the nucleotide pyrophosphatase/phosphodiesterase family. Requires Zn(2+) as cofactor.

The protein resides in the cell membrane. It carries out the reaction sn-glycerol 3-phosphocholine + H2O = phosphocholine + glycerol + H(+). The catalysed reaction is a 1-acyl-sn-glycero-3-phosphocholine + H2O = a 1-acyl-sn-glycerol + phosphocholine + H(+). It catalyses the reaction a 1-O-alkyl-sn-glycero-3-phosphocholine + H2O = a 1-O-alkyl-sn-glycerol + phosphocholine + H(+). The enzyme catalyses 1-dodecanoyl-sn-glycero-3-phosphocholine + H2O = 1-dodecanoyl-sn-glycerol + phosphocholine + H(+). It carries out the reaction 1-hexadecanoyl-sn-glycero-3-phosphocholine + H2O = 1-hexadecanoyl-sn-glycerol + phosphocholine + H(+). The catalysed reaction is 1-(5Z,8Z,11Z,14Z-eicosatetraenoyl)-sn-glycero-3-phosphocholine + H2O = 1-(5Z,8Z,11Z,14Z-eicosatetraenoyl)-sn-glycerol + phosphocholine + H(+). It catalyses the reaction 1-tetradecanoyl-sn-glycero-3-phosphocholine + H2O = 1-tetradecanoyl-sn-glycerol + phosphocholine + H(+). The enzyme catalyses sphing-4-enine-phosphocholine + H2O = sphing-4-enine + phosphocholine + H(+). It carries out the reaction 1-(9Z-octadecenoyl)-sn-glycero-3-phosphocholine + H2O = 1-(9Z-octadecenoyl)-sn-glycerol + phosphocholine + H(+). The catalysed reaction is 1-(9Z,12Z)-octadecadienoyl-sn-glycero-3-phosphocholine + H2O = 1-(9Z,12Z-octadecadienoyl)-sn-glycerol + phosphocholine + H(+). It catalyses the reaction glycero-2-phosphocholine + H2O = phosphocholine + glycerol + H(+). Choline-specific glycerophosphodiesterase that hydrolyzes glycerophosphocholine (GPC) and lysophosphatidylcholine (LPC) and contributes to supplying choline to the cells. Has a preference for LPC with short (12:0 and 14:0) or polyunsaturated (18:2 and 20:4) fatty acids. In vitro, hydrolyzes only choline-containing lysophospholipids, such as sphingosylphosphorylcholine (SPC), platelet-activating factor (PAF) and lysoPAF, but not other lysophospholipids. This Danio rerio (Zebrafish) protein is Glycerophosphocholine cholinephosphodiesterase ENPP6.